We begin with the raw amino-acid sequence, 363 residues long: MTSLINVNLPEQSYEIAIAPSNLDQLGQQMANLKLGKKVLLVSNPTIFKHYGERAITSLKSAGFEVASCTLPPGERYKNLNSIQKLYDVALENRLERSATMVALGGGVIGDMTGFAAATWLRGINVVQVPTTLLAMVDSAIGGKTGVNHPHGKNLIGAFHQPRLVLIDPDVLKTLPMREFRAGMAEVIKYGVIWDAELFAQLEASKRLDQLRYVKPELIDSILTRSCQAKADVVGKDEKEGGLRAILNYGHTIGHAVESLTGYRLVNHGEAVAIGMVAAGQIAVELGMWQKEDTERQNALIQKTGLPTQLPSGVDIEAIIDALQLDKKVKAGKVRFVLPTEIGVVTVTDEVPSDIIRQVLQGM.

NAD(+)-binding positions include 107–111 (GVIGD), 131–132 (TT), K144, and K153. Residues E186, H251, and H268 each contribute to the Zn(2+) site.

The protein belongs to the sugar phosphate cyclases superfamily. Dehydroquinate synthase family. Co(2+) serves as cofactor. The cofactor is Zn(2+). Requires NAD(+) as cofactor.

It is found in the cytoplasm. It catalyses the reaction 7-phospho-2-dehydro-3-deoxy-D-arabino-heptonate = 3-dehydroquinate + phosphate. It participates in metabolic intermediate biosynthesis; chorismate biosynthesis; chorismate from D-erythrose 4-phosphate and phosphoenolpyruvate: step 2/7. Functionally, catalyzes the conversion of 3-deoxy-D-arabino-heptulosonate 7-phosphate (DAHP) to dehydroquinate (DHQ). The polypeptide is 3-dehydroquinate synthase (Nostoc punctiforme (strain ATCC 29133 / PCC 73102)).